A 670-amino-acid chain; its full sequence is Oligopeptidase PepF (670 aa).

Position 456 (histidine 456) interacts with Zn(2+). Residue glutamate 457 is part of the active site. The Zn(2+) site is built by histidine 460 and histidine 463.

The protein belongs to the peptidase M3B family. Requires Zn(2+) as cofactor.

Its subcellular location is the cytoplasm. Overexpression results in inhibition of sporulation initiation. This sporulation deficiency could be the result of hydrolysis by PepF of the PhrA peptide, a phosphatase regulator. Thus, overexpression of PepF appears to act at the level of the phosphorelay, most likely through modulation of the negative role played by phosphatases. Overexpression of PepF also affects the activity of the competence and sporulation stimulating factor PhrC. This Bacillus subtilis (strain 168) protein is Oligopeptidase PepF.